Reading from the N-terminus, the 679-residue chain is Stress-70 protein, mitochondrial (679 aa).

Residues 1–46 (MISATRAAAARLVGTAASRTPAAARHQDGWNGLSHEAFRFVSRRDY) constitute a mitochondrion transit peptide. Residues 1 to 432 (MISATRAAAA…IQGGVLAGDV (432 aa)) form an interaction with NFS1 region. ADP is bound by residues T63 and N64. The nucleotide-binding domain (NBD) stretch occupies residues 63–431 (TNSCVAVMEG…AIQGGVLAGD (369 aa)). Position 76 is an N6-acetyllysine (K76). T87 carries the post-translational modification Phosphothreonine. K135 and K138 each carry N6-acetyllysine; alternate. Residues K135 and K138 each carry the N6-succinyllysine; alternate modification. K143 carries the post-translational modification N6-acetyllysine. K206 is subject to N6-acetyllysine; alternate. Residue K206 is modified to N6-succinyllysine; alternate. Residue K206 is modified to N6-malonyllysine; alternate. N6-acetyllysine is present on residues K234 and K288. K300 bears the N6-acetyllysine; alternate mark. The residue at position 300 (K300) is an N6-succinyllysine; alternate. Residues E313, K316, and S320 each coordinate ADP. Position 360 is an N6-acetyllysine; alternate (K360). K360 is modified (N6-succinyllysine; alternate). An N6-succinyllysine modification is found at K368. 2 residues coordinate ADP: G388 and R391. K394 is modified (N6-succinyllysine). The residue at position 408 (S408) is a Phosphoserine. Positions 432 to 441 (VTDVLLLDVT) are interdomain linker. An interaction with FXN and ISCU region spans residues 432-679 (VTDVLLLDVT…QKEDQKEEKQ (248 aa)). Residues 442-679 (PLSLGIETLG…QKEDQKEEKQ (238 aa)) form a substrate-binding domain (SBD) region. R513 bears the Omega-N-methylarginine mark. N6-acetyllysine; alternate is present on residues K567 and K600. 2 positions are modified to N6-succinyllysine; alternate: K567 and K600. K610 is subject to N6-succinyllysine. Residue K612 is modified to N6-acetyllysine. K646 carries the post-translational modification N6-acetyllysine; alternate. K646 carries the N6-succinyllysine; alternate modification. The interval 656 to 679 (ASEREGSGSSGTGEQKEDQKEEKQ) is disordered. The span at 669-679 (EQKEDQKEEKQ) shows a compositional bias: basic and acidic residues.

Belongs to the heat shock protein 70 family. Interacts strongly with the intermediate form of FXN and weakly with its mature form. Interacts with HSCB. Associates with the mitochondrial contact site and cristae organizing system (MICOS) complex, composed of at least MICOS10/MIC10, CHCHD3/MIC19, CHCHD6/MIC25, APOOL/MIC27, IMMT/MIC60, APOO/MIC23/MIC26 and QIL1/MIC13. This complex was also known under the names MINOS or MitOS complex. The MICOS complex associates with mitochondrial outer membrane proteins SAMM50, MTX1, MTX2 and DNAJC11, mitochondrial inner membrane protein TMEM11 and with HSPA9. Interacts with DNLZ, the interaction is required to prevent self-aggregation. Interacts with TESPA1. Interacts with PDPN. Interacts with NFU1, NFS1 and ISCU. Interacts with TP53; the interaction promotes TP53 degradation. Interacts (via SBD domain) with UBXN2A; the interaction with UBXN2A inhibits HSPA9/MOT-2 interaction with and degradation of TP53, thereby promotes TP53 translocation to the nucleus. Interacts with ITPR1 AND VDAC1; this interaction couples ITPR1 to VDAC1. Component of the TIM23 mitochondrial inner membrane pre-sequence translocase complex.

The protein resides in the mitochondrion. Its subcellular location is the nucleus. The protein localises to the nucleolus. It localises to the cytoplasm. It is found in the mitochondrion matrix. It carries out the reaction ATP + H2O = ADP + phosphate + H(+). Its activity is regulated as follows. The chaperone activity is regulated by ATP-induced allosteric coupling of the nucleotide-binding (NBD) and substrate-binding (SBD) domains. ATP binding in the NBD leads to a conformational change in the NBD, which is transferred through the interdomain linker (IDL) to the substrate-binding domain (SBD). This elicits a reduced substrate affinity and a faster substrate exchange rate. Upon hydrolysis of ATP to ADP, the protein undergoes a conformational change that increases its affinity for substrate proteins. It cycles through repeated phases of ATP hydrolysis and nucleotide exchange, facilitating repeated cycles of substrate binding and release. Functions in collaboration with co-chaperones. Functions with the co-chaperone, DNLZ, to maintain solubility and regulate ATP hydrolysis. Nucleotide exchange factors, GRPEL1 and GRPEL2, accelerate nucleotide exchange. Mitochondrial chaperone that plays a key role in mitochondrial protein import, folding, and assembly. Plays an essential role in the protein quality control system, the correct folding of proteins, the re-folding of misfolded proteins, and the targeting of proteins for subsequent degradation. These processes are achieved through cycles of ATP binding, ATP hydrolysis, and ADP release, mediated by co-chaperones. In mitochondria, it associates with the TIM (translocase of the inner membrane) protein complex to assist in the import and folding of mitochondrial proteins. Plays an important role in mitochondrial iron-sulfur cluster (ISC) biogenesis, interacts with and stabilizes ISC cluster assembly proteins FXN, NFU1, NFS1 and ISCU. Regulates erythropoiesis via stabilization of ISC assembly. Regulates mitochondrial calcium-dependent apoptosis by coupling two calcium channels, ITPR1 and VDAC1, at the mitochondria-associated endoplasmic reticulum (ER) membrane to facilitate calcium transport from the ER lumen to the mitochondria intermembrane space, providing calcium for the downstream calcium channel MCU, which releases it into the mitochondrial matrix. Although primarily located in the mitochondria, it is also found in other cellular compartments. In the cytosol, it associates with proteins involved in signaling, apoptosis, or senescence. It may play a role in cell cycle regulation via its interaction with and promotion of degradation of TP53. May play a role in the control of cell proliferation and cellular aging. Protects against reactive oxygen species (ROS). Extracellular HSPA9 plays a cytoprotective role by preventing cell lysis following immune attack by the membrane attack complex by disrupting formation of the complex. The chain is Stress-70 protein, mitochondrial from Cricetulus griseus (Chinese hamster).